Reading from the N-terminus, the 1183-residue chain is LRR receptor-like serine/threonine-protein kinase FLS2 (1183 aa).

The N-terminal stretch at 1-41 (MERNKFASKMSQHYTKTICIAVVLVAVLFSLSSAAAAGSGA) is a signal peptide. The Extracellular segment spans residues 42 to 809 (AVSVQLEALL…GKKRVFSRTG (768 aa)). A disulfide bridge links Cys87 with Cys94. N-linked (GlcNAc...) asparagine glycosylation is found at Asn88 and Asn120. LRR repeat units follow at residues 97–120 (AGQVTSIQLPESKLRGALSPFLGN), 121–145 (ISTLQVIDLTSNAFAGGIPPQLGRL), 147–169 (ELEQLVVSSNYFAGGIPSSLCNC), 171–193 (AMWALALNVNNLTGAIPSCIGDL), 194–217 (SNLEIFEAYLNNLDGELPPSMAKL), 218–241 (KGIMVVDLSCNQLSGSIPPEIGDL), 242–265 (SNLQILQLYENRFSGHIPRELGRC), 267–289 (NLTLLNIFSNGFTGEIPGELGEL), 290–313 (TNLEVMRLYKNALTSEIPRSLRRC), 315–337 (SLLNLDLSMNQLAGPIPPELGEL), 338–361 (PSLQRLSLHANRLAGTVPASLTNL), 363–385 (NLTILELSENHLSGPLPASIGSL), and 386–409 (RNLRRLIVQNNSLSGQIPASISNC). Cys167 and Cys189 are disulfide-bonded. N-linked (GlcNAc...) asparagine glycosylation is found at Asn168 and Asn181. N-linked (GlcNAc...) asparagine glycosylation occurs at Asn267. N-linked (GlcNAc...) asparagine glycosylation is found at Asn363, Asn395, Asn408, and Asn414. LRR repeat units lie at residues 433-457 (LQSLMFLSLGQNSLAGDIPDDLFDC), 459-480 (QLQKLDLSENSFTGGLSRLVGQ), 481-505 (LGNLTVLQLQGNALSGEIPEEIGNM), 507-529 (KLISLKLGRNRFAGHVPASISNM), 530-553 (SSLQLLDLGHNRLDGVFPAEVFEL), 555-577 (QLTILGAGSNRFAGPIPDAVANL), 578-600 (RSLSFLDLSSNMLNGTVPAALGR), 601-625 (LDQLLTLDLSHNRLAGAIPGAVIAS), 627-651 (SNVQMYLNLSNNAFTGAIPAEIGGL), 652-675 (VMVQTIDLSNNQLSGGVPATLAGC), 676-699 (KNLYSLDLSGNSLTGELPANLFPQ), 701-724 (DLLTTLNISGNDLDGEIPADIAAL), 725-748 (KHIQTLDVSRNAFAGAIPPALANL), and 749-773 (TALRSLNLSSNTFEGPVPDGGVFRN). Residues Asn483, Asn504, and Asn528 are each glycosylated (N-linked (GlcNAc...) asparagine). Residue Asn591 is glycosylated (N-linked (GlcNAc...) asparagine). Residue Asn634 is glycosylated (N-linked (GlcNAc...) asparagine). Asn707, Asn747, Asn755, and Asn773 each carry an N-linked (GlcNAc...) asparagine glycan. Residues 810–830 (LVILVVLIALSTLLLLMVATI) traverse the membrane as a helical segment. The Cytoplasmic portion of the chain corresponds to 831–1183 (LLVSYRRYRR…LKMSKLVGED (353 aa)). The 304-residue stretch at 876-1179 (FDQGNVIGSS…LSSLLKMSKL (304 aa)) folds into the Protein kinase domain. Residues 882-890 (IGSSNLSTV) and Lys908 each bind ATP. Catalysis depends on Asp1013, which acts as the Proton acceptor.

This sequence belongs to the protein kinase superfamily. Ser/Thr protein kinase family. As to quaternary structure, interacts with SERK2.

Its subcellular location is the cell membrane. It carries out the reaction L-seryl-[protein] + ATP = O-phospho-L-seryl-[protein] + ADP + H(+). The catalysed reaction is L-threonyl-[protein] + ATP = O-phospho-L-threonyl-[protein] + ADP + H(+). Constitutes the pattern-recognition receptor (PPR) that determines the specific perception of flagellin (flg22), a potent elicitor of the defense response to pathogen-associated molecular patterns (PAMPs). Recognizes flg22 from Pseudomonas aeruginosa and Acidovorax avenae. flg22 is a peptide derived from the bacterial flagellin N-terminus sequence. Does not recognize flg22 from Xanthomonas oryzae pv. oryzae (Xoo) or Xanthomonas oryzae pv. oryzicola (Xoc). In Oryza sativa subsp. japonica (Rice), this protein is LRR receptor-like serine/threonine-protein kinase FLS2.